A 156-amino-acid chain; its full sequence is Transcriptional repressor NrdR (156 aa).

A zinc finger spans residues 3–34 (CPFCHSDNDKVQDSRTAEAGYVVRRKRLCQTC). The region spanning 49–139 (VRVVKSDETR…VYRDFDDAKD (91 aa)) is the ATP-cone domain.

This sequence belongs to the NrdR family. Zn(2+) serves as cofactor.

Its function is as follows. Negatively regulates transcription of bacterial ribonucleotide reductase nrd genes and operons by binding to NrdR-boxes. This Rhodopirellula baltica (strain DSM 10527 / NCIMB 13988 / SH1) protein is Transcriptional repressor NrdR.